Consider the following 425-residue polypeptide: tRNA(Ile)-lysidine synthase (425 aa).

S27 to S32 serves as a coordination point for ATP.

Belongs to the tRNA(Ile)-lysidine synthase family.

It is found in the cytoplasm. The enzyme catalyses cytidine(34) in tRNA(Ile2) + L-lysine + ATP = lysidine(34) in tRNA(Ile2) + AMP + diphosphate + H(+). Ligates lysine onto the cytidine present at position 34 of the AUA codon-specific tRNA(Ile) that contains the anticodon CAU, in an ATP-dependent manner. Cytidine is converted to lysidine, thus changing the amino acid specificity of the tRNA from methionine to isoleucine. The polypeptide is tRNA(Ile)-lysidine synthase (Streptococcus pneumoniae serotype 2 (strain D39 / NCTC 7466)).